The sequence spans 245 residues: 5-oxoprolinase subunit A (245 aa).

This sequence belongs to the LamB/PxpA family. Forms a complex composed of PxpA, PxpB and PxpC.

The enzyme catalyses 5-oxo-L-proline + ATP + 2 H2O = L-glutamate + ADP + phosphate + H(+). In terms of biological role, catalyzes the cleavage of 5-oxoproline to form L-glutamate coupled to the hydrolysis of ATP to ADP and inorganic phosphate. This chain is 5-oxoprolinase subunit A, found in Serratia proteamaculans (strain 568).